The sequence spans 383 residues: Prokineticin receptor 2 (383 aa).

Residues 1 to 54 (MGDQNGNTSFAPDLNPPQDHVSLLPLNYSYGDYDIPLDDDEDVTKTQTFFAAKI) lie on the Extracellular side of the membrane. 2 N-linked (GlcNAc...) asparagine glycosylation sites follow: Asn7 and Asn27. The helical transmembrane segment at 55–75 (VIGVALAGIMLVCGVGNFVFI) threads the bilayer. Residues 76–89 (AALARYKKLRNLTN) lie on the Cytoplasmic side of the membrane. The helical transmembrane segment at 90–110 (LLIANLAISDFLVAIVCCPFE) threads the bilayer. Topologically, residues 111 to 136 (MDYYVVRQLSWEHGHVLCASVNYLRT) are extracellular. A disulfide bond links Cys128 and Cys207. The chain crosses the membrane as a helical span at residues 137-157 (VSLYVSTNALLAIAIDRYLAI). The Cytoplasmic portion of the chain corresponds to 158–170 (VHPLKRMNYQTAS). A helical membrane pass occupies residues 171 to 191 (FLIALVWMVSILIAIPSAYFT). The Extracellular portion of the chain corresponds to 192–222 (TETILVIVKNQEKLFCGQIWPVDQQLYYKSY). Residues 223 to 243 (FLFVFGLEFVGPVVTMTLCYA) traverse the membrane as a helical segment. Topologically, residues 244-272 (RISQELWFKAVPGFQTEQIRKRLRCRRKT) are cytoplasmic. The helical transmembrane segment at 273-293 (VLLLMGILTAYVLCWAPFYGF) threads the bilayer. Residues 294-312 (TIVRDFFPTLVVKEKHYLT) lie on the Extracellular side of the membrane. A helical membrane pass occupies residues 313-333 (AFYVVECIAMSNSMINTICFV). Over 334-383 (TVKNNTMKYFKKMLLLHWRPSHYGSKSSADLDLKTSGVPATEEVDCIRLK) the chain is Cytoplasmic.

It belongs to the G-protein coupled receptor 1 family. In terms of assembly, homodimer. Abundantly expressed in the CNS and reproductive organs with the highest levels in the cerebrum, cerebellum, testis and ovary.

Its subcellular location is the cell membrane. In terms of biological role, receptor for prokineticin 2. Exclusively coupled to the G(q) subclass of heteromeric G proteins. Activation leads to mobilization of calcium, stimulation of phosphoinositide turnover and activation of p44/p42 mitogen-activated protein kinase. This chain is Prokineticin receptor 2 (Prokr2), found in Rattus norvegicus (Rat).